We begin with the raw amino-acid sequence, 88 residues long: Small ribosomal subunit protein uS15 (88 aa).

Belongs to the universal ribosomal protein uS15 family. As to quaternary structure, part of the 30S ribosomal subunit. Forms a bridge to the 50S subunit in the 70S ribosome, contacting the 23S rRNA.

In terms of biological role, one of the primary rRNA binding proteins, it binds directly to 16S rRNA where it helps nucleate assembly of the platform of the 30S subunit by binding and bridging several RNA helices of the 16S rRNA. Its function is as follows. Forms an intersubunit bridge (bridge B4) with the 23S rRNA of the 50S subunit in the ribosome. This is Small ribosomal subunit protein uS15 from Francisella tularensis subsp. novicida (strain U112).